A 415-amino-acid polypeptide reads, in one-letter code: Gamma-glutamyl phosphate reductase (415 aa).

It belongs to the gamma-glutamyl phosphate reductase family.

It localises to the cytoplasm. It carries out the reaction L-glutamate 5-semialdehyde + phosphate + NADP(+) = L-glutamyl 5-phosphate + NADPH + H(+). The protein operates within amino-acid biosynthesis; L-proline biosynthesis; L-glutamate 5-semialdehyde from L-glutamate: step 2/2. Catalyzes the NADPH-dependent reduction of L-glutamate 5-phosphate into L-glutamate 5-semialdehyde and phosphate. The product spontaneously undergoes cyclization to form 1-pyrroline-5-carboxylate. The chain is Gamma-glutamyl phosphate reductase from Bacillus mycoides (strain KBAB4) (Bacillus weihenstephanensis).